The primary structure comprises 241 residues: Uridylate kinase (241 aa).

9–10 (GS) contacts ATP. Residue Gly-44 participates in UMP binding. ATP-binding residues include Gly-45 and Arg-49. UMP is bound by residues Asp-66 and 114 to 120 (IMPGQTT). Residues Thr-140, Tyr-146, and Asp-149 each contribute to the ATP site.

It belongs to the UMP kinase family. As to quaternary structure, homohexamer.

It localises to the cytoplasm. It carries out the reaction UMP + ATP = UDP + ADP. It participates in pyrimidine metabolism; CTP biosynthesis via de novo pathway; UDP from UMP (UMPK route): step 1/1. With respect to regulation, inhibited by UTP. Functionally, catalyzes the reversible phosphorylation of UMP to UDP. This chain is Uridylate kinase, found in Haloquadratum walsbyi (strain DSM 16790 / HBSQ001).